Reading from the N-terminus, the 626-residue chain is MIFLTTLPLFWIMISASRGGHWGAWMPSSISAFEGTCVSIPCRFDFPDELRPAVVHGVWYFNSPYPKNYPPVVFKSRTQVVHESFQGRSRLLGDLGLRNCTLLLSTLSPELGGKYYFRGDLGGYNQYTFSEHSVLDIINTPNIVVPPEVVAGTEVEVSCMVPDNCPELRPELSWLGHEGLGEPTVLGRLREDEGTWVQVSLLHFVPTREANGHRLGCQAAFPNTTLQFEGYASLDVKYPPVIVEMNSSVEAIEGSHVSLLCGADSNPPPLLTWMRDGMVLREAVAESLYLDLEEVTPAEDGIYACLAENAYGQDNRTVELSVMYAPWKPTVNGTVVAVEGETVSILCSTQSNPDPILTIFKEKQILATVIYESQLQLELPAVTPEDDGEYWCVAENQYGQRATAFNLSVEFAPIILLESHCAAARDTVQCLCVVKSNPEPSVAFELPSRNVTVNETEREFVYSERSGLLLTSILTLRGQAQAPPRVICTSRNLYGTQSLELPFQGAHRLMWAKIGPVGAVVAFAILIAIVCYITQTRRKKNVTESPSFSAGDNPHVLYSPEFRISGAPDKYESEKRLGSERRLLGLRGEPPELDLSYSHSDLGKRPTKDSYTLTEELAEYAEIRVK.

Residues Met-1–Gly-19 form the signal peptide. The tract at residues Gly-20–Ala-325 is interaction with RTN4R and RTN4RL2. The Extracellular portion of the chain corresponds to Gly-20 to Pro-516. In terms of domain architecture, Ig-like V-type spans Trp-22 to Asp-120. Cystine bridges form between Cys-37–Cys-165, Cys-42–Cys-100, and Cys-159–Cys-217. Residue Tyr-65–Lys-67 coordinates a ganglioside GT1b (d18:1(4E)). A glycan (N-linked (GlcNAc...) asparagine) is linked at Asn-99. A ganglioside GT1b (d18:1(4E)) contacts are provided by residues Arg-118 and Tyr-124–Thr-128. Ig-like C2-type domains are found at residues Asn-139–Lys-237, Val-241–Ala-325, Trp-327–Ala-412, and Pro-413–Arg-508. Residues Asn-223 and Asn-246 are each glycosylated (N-linked (GlcNAc...) asparagine). The cysteines at positions 261 and 305 are disulfide-linked. 2 N-linked (GlcNAc...) asparagine glycosylation sites follow: Asn-315 and Asn-332. Cys-347 and Cys-392 form a disulfide bridge. The N-linked (GlcNAc...) asparagine glycan is linked to Asn-406. 2 cysteine pairs are disulfide-bonded: Cys-421–Cys-430 and Cys-432–Cys-488. 2 N-linked (GlcNAc...) asparagine glycosylation sites follow: Asn-450 and Asn-454. A helical membrane pass occupies residues Val-517–Thr-536. Cys-531 carries the S-palmitoyl cysteine lipid modification. At Arg-537–Lys-626 the chain is on the cytoplasmic side. A phosphoserine mark is found at Ser-545, Ser-547, and Ser-549. The tract at residues Leu-577–Lys-626 is required for normal axon myelination in the central nervous system. A disordered region spans residues Arg-581–Lys-608.

It belongs to the immunoglobulin superfamily. SIGLEC (sialic acid binding Ig-like lectin) family. In terms of assembly, monomer and homodimer. Interacts (via the first three N-terminal Ig-like domains) with RTN4R and RTN4RL2. Interacts with isoform 2 of BSG. N-glycosylated. Post-translationally, phosphorylated on tyrosine residues. In terms of processing, ubiquitinated, leading to proteasomal degradation. In terms of tissue distribution, detected in myelin. Detected in olfactory bulb and throughout the brain (at protein level). Detected in brain.

The protein resides in the cell membrane. It localises to the membrane raft. Functionally, adhesion molecule that mediates interactions between myelinating cells and neurons by binding to neuronal sialic acid-containing gangliosides and to the glycoproteins RTN4R and RTN4RL2. Not required for initial myelination, but seems to play a role in the maintenance of normal axon myelination. Protects motoneurons against apoptosis, also after injury; protection against apoptosis is probably mediated via interaction with neuronal RTN4R and RTN4RL2. Required to prevent degeneration of myelinated axons in adults; this probably depends on binding to gangliosides on the axon cell membrane. Negative regulator of neurite outgrowth; in dorsal root ganglion neurons the inhibition is mediated primarily via binding to neuronal RTN4R or RTN4RL2 and to a lesser degree via binding to neuronal gangliosides. In cerebellar granule cells the inhibition is mediated primarily via binding to neuronal gangliosides. In sensory neurons, inhibition of neurite extension depends only partially on RTN4R, RTN4RL2 and gangliosides. Inhibits axon longitudinal growth. Inhibits axon outgrowth by binding to RTN4R. Preferentially binds to alpha-2,3-linked sialic acid. Binds ganglioside Gt1b. The protein is Myelin-associated glycoprotein (Mag) of Rattus norvegicus (Rat).